The sequence spans 436 residues: 3-ketoacyl-CoA thiolase (436 aa).

Residue Cys99 is the Acyl-thioester intermediate of the active site. Active-site proton acceptor residues include His392 and Cys422.

It belongs to the thiolase-like superfamily. Thiolase family. In terms of assembly, heterotetramer of two alpha chains (FadJ) and two beta chains (FadI).

The protein localises to the cytoplasm. The enzyme catalyses an acyl-CoA + acetyl-CoA = a 3-oxoacyl-CoA + CoA. The protein operates within lipid metabolism; fatty acid beta-oxidation. In terms of biological role, catalyzes the final step of fatty acid oxidation in which acetyl-CoA is released and the CoA ester of a fatty acid two carbons shorter is formed. This chain is 3-ketoacyl-CoA thiolase, found in Shewanella putrefaciens (strain CN-32 / ATCC BAA-453).